The following is a 231-amino-acid chain: GTP cyclohydrolase III (231 aa).

It belongs to the archaeal-type GTP cyclohydrolase family.

The enzyme catalyses GTP + 3 H2O = 2-amino-5-formylamino-6-(5-phospho-D-ribosylamino)pyrimidin-4(3H)-one + 2 phosphate + 2 H(+). Functionally, catalyzes the formation of 2-amino-5-formylamino-6-ribofuranosylamino-4(3H)-pyrimidinone ribonucleotide monophosphate and inorganic phosphate from GTP. Also has an independent pyrophosphate phosphohydrolase activity. In Saccharolobus solfataricus (strain ATCC 35092 / DSM 1617 / JCM 11322 / P2) (Sulfolobus solfataricus), this protein is GTP cyclohydrolase III.